Here is a 122-residue protein sequence, read N- to C-terminus: Small ribosomal subunit protein uS13 (122 aa).

The interval 95–122 is disordered; it reads GLPVRGQRTHTNARTRKGPAKPIAGKKK.

This sequence belongs to the universal ribosomal protein uS13 family. As to quaternary structure, part of the 30S ribosomal subunit. Forms a loose heterodimer with protein S19. Forms two bridges to the 50S subunit in the 70S ribosome.

In terms of biological role, located at the top of the head of the 30S subunit, it contacts several helices of the 16S rRNA. In the 70S ribosome it contacts the 23S rRNA (bridge B1a) and protein L5 of the 50S subunit (bridge B1b), connecting the 2 subunits; these bridges are implicated in subunit movement. Contacts the tRNAs in the A and P-sites. The sequence is that of Small ribosomal subunit protein uS13 from Caulobacter sp. (strain K31).